The chain runs to 354 residues: Probable L-ascorbate-6-phosphate lactonase UlaG (354 aa).

The protein belongs to the UlaG family. A divalent metal cation serves as cofactor.

The protein localises to the cytoplasm. The catalysed reaction is L-ascorbate 6-phosphate + H2O = 3-dehydro-L-gulonate 6-phosphate. It functions in the pathway cofactor degradation; L-ascorbate degradation; D-xylulose 5-phosphate from L-ascorbate: step 1/4. Its function is as follows. Probably catalyzes the hydrolysis of L-ascorbate-6-P into 3-keto-L-gulonate-6-P. Is essential for L-ascorbate utilization under anaerobic conditions. This chain is Probable L-ascorbate-6-phosphate lactonase UlaG, found in Shigella flexneri.